Consider the following 87-residue polypeptide: Acetolactate synthase isozyme 2 small subunit (87 aa).

One can recognise an ACT domain in the interval 5–78 (QVNVSARFNP…DVAHVAICQS (74 aa)).

As to quaternary structure, tetramer of two large and two small chains. Mg(2+) is required as a cofactor. The cofactor is thiamine diphosphate.

The enzyme catalyses 2 pyruvate + H(+) = (2S)-2-acetolactate + CO2. The protein operates within amino-acid biosynthesis; L-isoleucine biosynthesis; L-isoleucine from 2-oxobutanoate: step 1/4. It participates in amino-acid biosynthesis; L-valine biosynthesis; L-valine from pyruvate: step 1/4. The sequence is that of Acetolactate synthase isozyme 2 small subunit (ilvM) from Escherichia coli O6:H1 (strain CFT073 / ATCC 700928 / UPEC).